A 202-amino-acid chain; its full sequence is Orotate phosphoribosyltransferase (202 aa).

Residues Arg94, Lys98, His100, and Glu120–Ser128 each bind 5-phospho-alpha-D-ribose 1-diphosphate. Residue Ser124 participates in orotate binding.

The protein belongs to the purine/pyrimidine phosphoribosyltransferase family. PyrE subfamily. As to quaternary structure, homodimer. The cofactor is Mg(2+).

It carries out the reaction orotidine 5'-phosphate + diphosphate = orotate + 5-phospho-alpha-D-ribose 1-diphosphate. Its pathway is pyrimidine metabolism; UMP biosynthesis via de novo pathway; UMP from orotate: step 1/2. Its function is as follows. Catalyzes the transfer of a ribosyl phosphate group from 5-phosphoribose 1-diphosphate to orotate, leading to the formation of orotidine monophosphate (OMP). The protein is Orotate phosphoribosyltransferase of Oceanobacillus iheyensis (strain DSM 14371 / CIP 107618 / JCM 11309 / KCTC 3954 / HTE831).